The primary structure comprises 372 residues: Cytochrome b (372 aa).

Helical transmembrane passes span 25-45 (FGSM…FLAI), 69-90 (WMMQ…YIHI), 105-125 (WLSG…GYVL), and 170-190 (FFAL…IHIM). The heme b site is built by His75 and His89. 2 residues coordinate heme b: His174 and His188. A ubiquinone is bound at residue His193. The next 4 membrane-spanning stretches (helical) occupy residues 218 to 238 (HKDM…MSFM), 280 to 300 (LGGT…PFTH), 312 to 332 (LMQF…WAAT), and 339 to 358 (FTTI…IMNP).

It belongs to the cytochrome b family. The cytochrome bc1 complex contains 3 respiratory subunits (MT-CYB, CYC1 and UQCRFS1), 2 core proteins (UQCRC1 and UQCRC2) and probably 6 low-molecular weight proteins. The cofactor is heme b.

The protein resides in the mitochondrion inner membrane. Functionally, component of the ubiquinol-cytochrome c reductase complex (complex III or cytochrome b-c1 complex) that is part of the mitochondrial respiratory chain. The b-c1 complex mediates electron transfer from ubiquinol to cytochrome c. Contributes to the generation of a proton gradient across the mitochondrial membrane that is then used for ATP synthesis. This is Cytochrome b (MT-CYB) from Pantherophis obsoletus (Black ratsnake).